We begin with the raw amino-acid sequence, 327 residues long: Aldo-keto reductase family 1 member A1 (327 aa).

NADP(+) is bound by residues 13–22 (GQKIPLIGLG), threonine 23, tryptophan 24, and aspartate 47. The active-site Proton donor is tyrosine 52. The NADP(+) site is built by serine 164, asparagine 165, serine 213, leucine 215, serine 217, lysine 265, serine 266, valine 267, threonine 268, arginine 271, glutamine 274, and asparagine 275.

Belongs to the aldo/keto reductase family.

It localises to the cytoplasm. The protein localises to the cytosol. It is found in the apical cell membrane. It catalyses the reaction a primary alcohol + NADP(+) = an aldehyde + NADPH + H(+). The enzyme catalyses S-nitroso-CoA + NADPH + H(+) = sulfinamide-CoA + NADP(+). The catalysed reaction is S-nitrosoglutathione + NADPH + H(+) = S-(hydroxysulfenamide)glutathione + NADP(+). In terms of biological role, catalyzes the NADPH-dependent reduction of a wide variety of carbonyl-containing compounds to their corresponding alcohols. Displays enzymatic activity towards endogenous metabolites such as aromatic and aliphatic aldehydes, ketones, monosaccharides and bile acids. Acts as an aldehyde-detoxification enzyme. Also acts as an inhibitor of protein S-nitrosylation by mediating degradation of S-nitroso-coenzyme A (S-nitroso-CoA), a cofactor required to S-nitrosylate proteins. Also acts as a S-nitroso-glutathione reductase by catalyzing the NADPH-dependent reduction of S-nitrosoglutathione. Displays no reductase activity towards retinoids. The chain is Aldo-keto reductase family 1 member A1 (AKR1A1) from Gallus gallus (Chicken).